Reading from the N-terminus, the 407-residue chain is Putative glycosyltransferase YtcC (407 aa).

This sequence belongs to the glycosyltransferase group 1 family. Glycosyltransferase 4 subfamily.

The chain is Putative glycosyltransferase YtcC (ytcC) from Bacillus subtilis (strain 168).